The primary structure comprises 260 residues: Carbonic anhydrase 2 (260 aa).

The residue at position 2 (Ser2) is an N-acetylserine. The residue at position 2 (Ser2) is a Phosphoserine. One can recognise an Alpha-carbonic anhydrase domain in the interval 3–259 (HHWGYGKHNG…LKNRQIKASF (257 aa)). The Proton donor/acceptor role is filled by His64. Residues His94, His96, and His119 each coordinate Zn(2+). Phosphoserine is present on residues Ser165 and Ser172. 198–199 (TT) lines the substrate pocket.

Belongs to the alpha-carbonic anhydrase family. As to quaternary structure, interacts with SLC4A4. Interaction with SLC4A7 regulates SLC4A7 transporter activity. Interacts with SLC26A6 isoform 4 (via C-terminus cytoplasmic domain). Zn(2+) serves as cofactor. The cofactor is Co(2+).

The protein resides in the cytoplasm. It is found in the cell membrane. It carries out the reaction hydrogencarbonate + H(+) = CO2 + H2O. The catalysed reaction is urea = cyanamide + H2O. Its activity is regulated as follows. Activated by X-ray, histamine, L-adrenaline, L- and D-phenylalanine, L- and D-histidine, L-His-OMe and beta-Ala-His (carnosine). Competitively inhibited by saccharin, thioxolone, coumarins, 667-coumate, celecoxib (Celebrex), valdecoxib (Bextra), SC-125, SC-560, diclofenac, acetate, azide, bromide, sulfonamide derivatives such as acetazolamide (AZA), methazolamide (MZA), ethoxzolamide (EZA), dichlorophenamide (DCP), brinzolamide, dansylamide, thiabendazole-5-sulfonamide, trifluoromethane sulfonamide and N-hydroxysulfamide, fructose-based sugar sulfamate RWJ-37497, and Foscarnet (phosphonoformate trisodium salt). Repressed strongly by hydrogen sulfide(HS) and weakly by nitrate (NO(3)). Esterase activity weakly reduced by cyanamide. N-hydroxyurea interferes with zinc binding and inhibit activity. Catalyzes the reversible hydration of carbon dioxide. Can also hydrate cyanamide to urea. Stimulates the chloride-bicarbonate exchange activity of SLC26A6. Essential for bone resorption and osteoclast differentiation. Involved in the regulation of fluid secretion into the anterior chamber of the eye. Contributes to intracellular pH regulation in the duodenal upper villous epithelium during proton-coupled peptide absorption. The sequence is that of Carbonic anhydrase 2 (CA2) from Homo sapiens (Human).